We begin with the raw amino-acid sequence, 455 residues long: Peroxisomal membrane protein PEX3 (455 aa).

Over residues 113-125 (TVLSDDFSTSQEG) the composition is skewed to polar residues. Positions 113–135 (TVLSDDFSTSQEGAISEDTNKPP) are disordered. Residues 155 to 171 (FLTLIYCESLLIVFLHL) form a helical membrane-spanning segment.

Belongs to the peroxin-3 family. Component of the peroxisomal docking complex, composed of at least PEX3, PEX13, PEX14 and PEX17. Component of the peroxisomal translocation complex, composed of at least PEX3, PEX2, PEX10 and PEX12. Interacts with PEX19. Interacts with the pexophagy receptor ATG30.

The protein resides in the peroxisome membrane. Its function is as follows. Peroxisomal membrane protein required for peroxisome biosynthesis. Shared component of both the peroxisomal docking complex and the peroxisomal translocation complex. The two types of peroxisomal matrix targeting signals, PTS1 and PTS2, are first recognized in the cytosol by their receptors PEX5 and PEX7, respectively, which then carry the cargo to the peroxisomal membrane. The peroxisomal targeting signal (PTS) receptor-cargo complexes interact with peroxisomal membrane protein (PMP) components of the docking complex. They have then additional downstream interactions with the translocation complex, leading to the transport of fully folded and oligomerized cargo into the peroxisome matrix. PEX3 acts as an anchoring site for PEX19 on the peroxisomal membrane and thus plays a crucial role in the assembly of the peroxisomal translocation complex. Is also essential for the interaction between the two complexes. Finally. PEX3 activates selective autophagy of peroxisomes (pexophagy) via interaction with the pexophagy receptor ATG30. This Komagataella pastoris (Yeast) protein is Peroxisomal membrane protein PEX3.